The chain runs to 182 residues: MKLAELKDHMQKSVEATQRSFNTIRTGRANASLLDRITVEYYGAETPLKSLATIGTPDASTIVIQPFDMGSIGTIEKAISLSDLGLTPNNDGKVIRLNIPPLTAERRKELVKVAGKLAEEGKVAIRNIRRDAVDEVRKQEKNSDISEDEARDLQEEIQKLTDQSTKRIDELLAAKEKDITTV.

Belongs to the RRF family.

The protein localises to the cytoplasm. Its function is as follows. Responsible for the release of ribosomes from messenger RNA at the termination of protein biosynthesis. May increase the efficiency of translation by recycling ribosomes from one round of translation to another. The protein is Ribosome-recycling factor of Synechocystis sp. (strain ATCC 27184 / PCC 6803 / Kazusa).